The following is a 149-amino-acid chain: MKYTRHSKILELIDKNEIETQEELSERLKDMGFTVTQATVSRDIKELRLIKVLTKNGKYKYATLQSQENILSDRVVKIFKNSVVSIDYAGNLIVIKTLTGSAQAAAAAIDAGDMNDVVGTIAGDDTIFIVIRDEKNVPSTIEHFRKLMK.

This sequence belongs to the ArgR family.

The protein localises to the cytoplasm. It participates in amino-acid biosynthesis; L-arginine biosynthesis [regulation]. In terms of biological role, regulates arginine biosynthesis genes. The sequence is that of Arginine repressor from Alkaliphilus oremlandii (strain OhILAs) (Clostridium oremlandii (strain OhILAs)).